Consider the following 259-residue polypeptide: Large ribosomal subunit protein uL2m (259 aa).

A disordered region spans residues 234–259 (VAMNPVDHPNGGRTKTPKPERSPGVE). Basic and acidic residues predominate over residues 250 to 259 (PKPERSPGVE).

This sequence belongs to the universal ribosomal protein uL2 family.

It is found in the mitochondrion. The polypeptide is Large ribosomal subunit protein uL2m (RPL2) (Paramecium tetraurelia).